The chain runs to 254 residues: Ribosomal RNA small subunit methyltransferase J (254 aa).

S-adenosyl-L-methionine is bound by residues 107 to 108, 123 to 124, and Asp177; these read RD and ER.

It belongs to the methyltransferase superfamily. RsmJ family.

The protein resides in the cytoplasm. The enzyme catalyses guanosine(1516) in 16S rRNA + S-adenosyl-L-methionine = N(2)-methylguanosine(1516) in 16S rRNA + S-adenosyl-L-homocysteine + H(+). Its function is as follows. Specifically methylates the guanosine in position 1516 of 16S rRNA. The sequence is that of Ribosomal RNA small subunit methyltransferase J from Histophilus somni (strain 129Pt) (Haemophilus somnus).